The sequence spans 121 residues: Large ribosomal subunit protein bL20 (121 aa).

It belongs to the bacterial ribosomal protein bL20 family.

In terms of biological role, binds directly to 23S ribosomal RNA and is necessary for the in vitro assembly process of the 50S ribosomal subunit. It is not involved in the protein synthesizing functions of that subunit. In Petrotoga mobilis (strain DSM 10674 / SJ95), this protein is Large ribosomal subunit protein bL20.